A 120-amino-acid polypeptide reads, in one-letter code: NAD(P)H-quinone oxidoreductase subunit 3, chloroplastic (120 aa).

Helical transmembrane passes span Ile-9 to Gly-29, Met-64 to Met-84, and Val-88 to Leu-108.

Belongs to the complex I subunit 3 family. As to quaternary structure, NDH is composed of at least 16 different subunits, 5 of which are encoded in the nucleus.

Its subcellular location is the plastid. The protein resides in the chloroplast thylakoid membrane. It carries out the reaction a plastoquinone + NADH + (n+1) H(+)(in) = a plastoquinol + NAD(+) + n H(+)(out). The catalysed reaction is a plastoquinone + NADPH + (n+1) H(+)(in) = a plastoquinol + NADP(+) + n H(+)(out). Functionally, NDH shuttles electrons from NAD(P)H:plastoquinone, via FMN and iron-sulfur (Fe-S) centers, to quinones in the photosynthetic chain and possibly in a chloroplast respiratory chain. The immediate electron acceptor for the enzyme in this species is believed to be plastoquinone. Couples the redox reaction to proton translocation, and thus conserves the redox energy in a proton gradient. This chain is NAD(P)H-quinone oxidoreductase subunit 3, chloroplastic, found in Zea mays (Maize).